The sequence spans 333 residues: Type II secretion system protein K (333 aa).

A propeptide spans 1 to 7 (MRRGQNG) (leader sequence). The chain crosses the membrane as a helical span at residues 8-29 (VALITVLLVVAVVTIVCAGLII). Topologically, residues 30–333 (RQQLAIRSSA…GGDDWKKDER (304 aa)) are periplasmic. A disordered region spans residues 313–333 (MGQGGLPIPSTGGDDWKKDER).

It belongs to the GSP K family. Type II secretion is composed of four main components: the outer membrane complex, the inner membrane complex, the cytoplasmic secretion ATPase and the periplasm-spanning pseudopilus. Interacts with the tip of the type II pseudopilus subunits XcpV, XcpU and XcpW. Interacts with core component XcpT. Post-translationally, cleaved by prepilin peptidase.

It is found in the cell inner membrane. Functionally, component of the type II secretion system required for the energy-dependent secretion of extracellular factors such as proteases and toxins from the periplasm. Plays a role in pseudopilus assembly and seems to control its length. Interacts with the pseudopilus tip complex that is critical for the recognition and binding of secretion substrates. Type II pseudopilus confers increased bacterial adhesive capabilities. The sequence is that of Type II secretion system protein K (xcpX) from Pseudomonas aeruginosa (strain ATCC 15692 / DSM 22644 / CIP 104116 / JCM 14847 / LMG 12228 / 1C / PRS 101 / PAO1).